Consider the following 116-residue polypeptide: Large ribosomal subunit protein bL19 (116 aa).

This sequence belongs to the bacterial ribosomal protein bL19 family.

This protein is located at the 30S-50S ribosomal subunit interface and may play a role in the structure and function of the aminoacyl-tRNA binding site. The protein is Large ribosomal subunit protein bL19 of Pseudomonas entomophila (strain L48).